We begin with the raw amino-acid sequence, 207 residues long: dITP/XTP pyrophosphatase (207 aa).

Substrate is bound at residue 16–21 (SNNKGK). The Proton acceptor role is filled by D79. D79 provides a ligand contact to Mg(2+). Residues S80, 166 to 169 (FGYD), K189, and 194 to 195 (HR) contribute to the substrate site.

This sequence belongs to the HAM1 NTPase family. Homodimer. Mg(2+) serves as cofactor.

The catalysed reaction is XTP + H2O = XMP + diphosphate + H(+). It catalyses the reaction dITP + H2O = dIMP + diphosphate + H(+). It carries out the reaction ITP + H2O = IMP + diphosphate + H(+). Functionally, pyrophosphatase that catalyzes the hydrolysis of nucleoside triphosphates to their monophosphate derivatives, with a high preference for the non-canonical purine nucleotides XTP (xanthosine triphosphate), dITP (deoxyinosine triphosphate) and ITP. Seems to function as a house-cleaning enzyme that removes non-canonical purine nucleotides from the nucleotide pool, thus preventing their incorporation into DNA/RNA and avoiding chromosomal lesions. The protein is dITP/XTP pyrophosphatase of Acinetobacter baumannii (strain ATCC 17978 / DSM 105126 / CIP 53.77 / LMG 1025 / NCDC KC755 / 5377).